A 470-amino-acid polypeptide reads, in one-letter code: Cysteine--tRNA ligase (470 aa).

A Zn(2+)-binding site is contributed by C27. Positions P29–N39 match the 'HIGH' region motif. Zn(2+) contacts are provided by C207, H232, and E236. Positions K264–S268 match the 'KMSKS' region motif. K267 provides a ligand contact to ATP.

This sequence belongs to the class-I aminoacyl-tRNA synthetase family. Monomer. Zn(2+) is required as a cofactor.

It is found in the cytoplasm. It catalyses the reaction tRNA(Cys) + L-cysteine + ATP = L-cysteinyl-tRNA(Cys) + AMP + diphosphate. This chain is Cysteine--tRNA ligase, found in Lachnoclostridium phytofermentans (strain ATCC 700394 / DSM 18823 / ISDg) (Clostridium phytofermentans).